A 145-amino-acid chain; its full sequence is Transmembrane protein 170A (145 aa).

At 1–50 (MIEALIVGEMQDVQIGFVKQILSLNLVPRSNNTTCGNNTSLCDFSEMWYG) the chain is on the lumenal side. Asn-31 and Asn-37 each carry an N-linked (GlcNAc...) asparagine glycan. The chain crosses the membrane as a helical span at residues 51–71 (VFLWAVVSSLIFHLPAALLAL). Residues 72-81 (ATLRRHKVAR) lie on the Cytoplasmic side of the membrane. A helical transmembrane segment spans residues 82–102 (FFPLGILLMGIIGPLFGGVLT). The Lumenal portion of the chain corresponds to 103–117 (SAAIAGVYKAAGKSM). The chain crosses the membrane as a helical span at residues 118 to 138 (FSLEALVFGVGQSLFIFIISF). Residues 139 to 145 (LRILATL) lie on the Cytoplasmic side of the membrane.

It belongs to the TMEM170 family.

It localises to the endoplasmic reticulum membrane. Its subcellular location is the nucleus envelope. May regulate membrane morphogenesis in the endoplasmic reticulum (ER) by promoting ER sheet formation at the expense of ER tubules. This chain is Transmembrane protein 170A (tmem170a), found in Danio rerio (Zebrafish).